Consider the following 398-residue polypeptide: Lysophospholipid transporter LplT (398 aa).

The next 12 helical transmembrane spans lie at 16 to 36 (MIAV…LLFA), 53 to 73 (ILQM…GQVA), 91 to 111 (AGAL…LVGV), 139 to 159 (LMEA…GILA), 163 to 183 (IVAA…ANLY), 195 to 213 (SWTP…VVLW), 227 to 247 (LFWG…PVAL), 253 to 273 (ATPT…AGAA), 286 to 306 (MPAG…TTLF), 310 to 330 (ALLL…NALL), 344 to 364 (IAVQ…LYSL), and 372 to 392 (VVGV…ALWL).

The protein belongs to the major facilitator superfamily. LplT (TC 2.A.1.42) family.

The protein resides in the cell inner membrane. Its function is as follows. Catalyzes the facilitated diffusion of 2-acyl-glycero-3-phosphoethanolamine (2-acyl-GPE) into the cell. This is Lysophospholipid transporter LplT from Serratia proteamaculans (strain 568).